The primary structure comprises 247 residues: Protein McbF (247 aa).

The 229-residue stretch at Leu6 to Leu234 folds into the ABC transporter domain. Gly40–Thr47 provides a ligand contact to ATP.

The protein belongs to the ABC transporter superfamily.

Functionally, together with two further proteins McbE and McbG this protein causes immunity to the peptide antibiotic microcin B17, which inhibits DNA replication in enterobacteriaceae. Immunity is determined by two different mechanisms. McbE is involved in the production of extracellular MccB17 and, in a complex with mcbf it also serves as 'pump' for the export of active MccB17 from the cytoplasm to the periplasmic space. This is Protein McbF (mcbF) from Escherichia coli.